The following is a 266-amino-acid chain: Aliphatic sulfonates import ATP-binding protein SsuB (266 aa).

An ABC transporter domain is found at 23–244 (LALDAITKHY…RRGSAKLAEL (222 aa)). 55 to 62 (GRSGCGKS) is a binding site for ATP.

It belongs to the ABC transporter superfamily. Aliphatic sulfonates importer (TC 3.A.1.17.2) family. In terms of assembly, the complex is composed of two ATP-binding proteins (SsuB), two transmembrane proteins (SsuC) and a solute-binding protein (SsuA).

It localises to the cell inner membrane. The enzyme catalyses ATP + H2O + aliphatic sulfonate-[sulfonate-binding protein]Side 1 = ADP + phosphate + aliphatic sulfonateSide 2 + [sulfonate-binding protein]Side 1.. Functionally, part of the ABC transporter complex SsuABC involved in aliphatic sulfonates import. Responsible for energy coupling to the transport system. The polypeptide is Aliphatic sulfonates import ATP-binding protein SsuB (Pectobacterium atrosepticum (strain SCRI 1043 / ATCC BAA-672) (Erwinia carotovora subsp. atroseptica)).